The following is a 390-amino-acid chain: Succinate--CoA ligase [ADP-forming] subunit beta (390 aa).

Residues Lys9–Glu248 enclose the ATP-grasp domain. ATP-binding positions include Lys50, Gly57–Gly59, Glu103, Met106, and Glu111. Mg(2+) contacts are provided by Asn203 and Asp217. Residues Asn268 and Gly325–Val327 contribute to the substrate site.

It belongs to the succinate/malate CoA ligase beta subunit family. Heterotetramer of two alpha and two beta subunits. It depends on Mg(2+) as a cofactor.

It catalyses the reaction succinate + ATP + CoA = succinyl-CoA + ADP + phosphate. The catalysed reaction is GTP + succinate + CoA = succinyl-CoA + GDP + phosphate. It functions in the pathway carbohydrate metabolism; tricarboxylic acid cycle; succinate from succinyl-CoA (ligase route): step 1/1. Its function is as follows. Succinyl-CoA synthetase functions in the citric acid cycle (TCA), coupling the hydrolysis of succinyl-CoA to the synthesis of either ATP or GTP and thus represents the only step of substrate-level phosphorylation in the TCA. The beta subunit provides nucleotide specificity of the enzyme and binds the substrate succinate, while the binding sites for coenzyme A and phosphate are found in the alpha subunit. The polypeptide is Succinate--CoA ligase [ADP-forming] subunit beta (Chlorobium chlorochromatii (strain CaD3)).